We begin with the raw amino-acid sequence, 421 residues long: Serine hydroxymethyltransferase (421 aa).

Residues Leu121 and 125 to 127 contribute to the (6S)-5,6,7,8-tetrahydrofolate site; that span reads GHL. Residue Lys229 is modified to N6-(pyridoxal phosphate)lysine.

The protein belongs to the SHMT family. In terms of assembly, homodimer. Requires pyridoxal 5'-phosphate as cofactor.

The protein resides in the cytoplasm. The enzyme catalyses (6R)-5,10-methylene-5,6,7,8-tetrahydrofolate + glycine + H2O = (6S)-5,6,7,8-tetrahydrofolate + L-serine. The protein operates within one-carbon metabolism; tetrahydrofolate interconversion. It functions in the pathway amino-acid biosynthesis; glycine biosynthesis; glycine from L-serine: step 1/1. Functionally, catalyzes the reversible interconversion of serine and glycine with tetrahydrofolate (THF) serving as the one-carbon carrier. This reaction serves as the major source of one-carbon groups required for the biosynthesis of purines, thymidylate, methionine, and other important biomolecules. Also exhibits THF-independent aldolase activity toward beta-hydroxyamino acids, producing glycine and aldehydes, via a retro-aldol mechanism. The protein is Serine hydroxymethyltransferase of Haemophilus influenzae (strain PittGG).